The following is a 96-amino-acid chain: Co-chaperonin GroES (96 aa).

This sequence belongs to the GroES chaperonin family. As to quaternary structure, heptamer of 7 subunits arranged in a ring. Interacts with the chaperonin GroEL.

Its subcellular location is the cytoplasm. Functionally, together with the chaperonin GroEL, plays an essential role in assisting protein folding. The GroEL-GroES system forms a nano-cage that allows encapsulation of the non-native substrate proteins and provides a physical environment optimized to promote and accelerate protein folding. GroES binds to the apical surface of the GroEL ring, thereby capping the opening of the GroEL channel. This is Co-chaperonin GroES from Wolbachia sp. subsp. Brugia malayi (strain TRS).